Here is a 277-residue protein sequence, read N- to C-terminus: Soluble NSF attachment protein 29 (277 aa).

Positions methionine 1–arginine 11 are enriched in basic and acidic residues. Disordered stretches follow at residues methionine 1–tyrosine 30, glutamate 49–glutamine 73, and lysine 117–arginine 170. Residues alanine 14 to glycine 28 show a composition bias toward polar residues. In terms of domain architecture, t-SNARE coiled-coil homology 1 spans glutamate 44 to leucine 106. The segment covering glutamate 49 to glutamate 65 has biased composition (basic and acidic residues). Over residues serine 134–arginine 170 the composition is skewed to polar residues. In terms of domain architecture, t-SNARE coiled-coil homology 2 spans glutamate 179–isoleucine 241.

Belongs to the SNAP-25 family.

It is found in the synapse. It localises to the synaptosome. Functionally, SNAREs, soluble N-ethylmaleimide-sensitive factor-attachment protein receptors, are essential proteins for fusion of cellular membranes. SNAREs localized on opposing membranes assemble to form a trans-SNARE complex, an extended, parallel four alpha-helical bundle that drives membrane fusion. Plays a role in the processing and secretion of the aspartic protease hrg-7 from the intestine. The protein is Soluble NSF attachment protein 29 of Caenorhabditis elegans.